Reading from the N-terminus, the 309-residue chain is Cytidine deaminase (309 aa).

CMP/dCMP-type deaminase domains are found at residues 48–168 (DEDA…FGPR) and 200–309 (DDND…SLSL). Residue 89-91 (NME) coordinates substrate. His102 is a Zn(2+) binding site. Residue Glu104 is the Proton donor of the active site. Residues Cys129 and Cys132 each coordinate Zn(2+).

Belongs to the cytidine and deoxycytidylate deaminase family. As to quaternary structure, homodimer. Zn(2+) is required as a cofactor.

The catalysed reaction is cytidine + H2O + H(+) = uridine + NH4(+). The enzyme catalyses 2'-deoxycytidine + H2O + H(+) = 2'-deoxyuridine + NH4(+). In terms of biological role, this enzyme scavenges exogenous and endogenous cytidine and 2'-deoxycytidine for UMP synthesis. The polypeptide is Cytidine deaminase (Sodalis glossinidius (strain morsitans)).